Consider the following 642-residue polypeptide: Chaperone protein DnaK (642 aa).

A Phosphothreonine; by autocatalysis modification is found at threonine 198. A compositionally biased stretch (basic and acidic residues) spans 578–589 (DDKEAIESRMQK). The disordered stretch occupies residues 578 to 642 (DDKEAIESRM…FEEVKDGDKK (65 aa)). The span at 603-619 (AEQAAQQGGDAGAQAED) shows a compositional bias: low complexity.

The protein belongs to the heat shock protein 70 family.

Its function is as follows. Acts as a chaperone. The chain is Chaperone protein DnaK from Hahella chejuensis (strain KCTC 2396).